Consider the following 105-residue polypeptide: Late embryogenesis abundant protein Lea5-D (105 aa).

The interval 48–67 (KVERRDAMKESSSSETRAYS) is disordered. Residues 57 to 67 (ESSSSETRAYS) are compositionally biased toward low complexity.

This sequence belongs to the LEA type 3 family.

The polypeptide is Late embryogenesis abundant protein Lea5-D (LEA5-D) (Gossypium hirsutum (Upland cotton)).